A 149-amino-acid polypeptide reads, in one-letter code: Protein SprT-like (149 aa).

Residues 4–143 (TDYVKQVSLE…CGLCRGKLLL (140 aa)) enclose the SprT-like domain. Zn(2+) is bound at residue histidine 64. Glutamate 65 is an active-site residue. Position 68 (histidine 68) interacts with Zn(2+).

It belongs to the SprT family. Zn(2+) is required as a cofactor.

It is found in the cytoplasm. The sequence is that of Protein SprT-like from Streptococcus pneumoniae (strain Taiwan19F-14).